The primary structure comprises 452 residues: Phosphatidylinositol N-acetylglucosaminyltransferase GPI3 subunit (452 aa).

A helical transmembrane segment spans residues 407–427 (LYLLCGIVEYMLFFLLEWLYP).

It belongs to the glycosyltransferase group 1 family. In terms of assembly, component of the phosphatidylinositol N-acetylglucosaminyltransferase complex composed of at least GPI1, GPI2, GPI3, GPI15, GPI19 and ERI1.

It is found in the endoplasmic reticulum membrane. The enzyme catalyses a 1,2-diacyl-sn-glycero-3-phospho-(1D-myo-inositol) + UDP-N-acetyl-alpha-D-glucosamine = a 6-(N-acetyl-alpha-D-glucosaminyl)-1-(1,2-diacyl-sn-glycero-3-phospho)-1D-myo-inositol + UDP + H(+). The protein operates within glycolipid biosynthesis; glycosylphosphatidylinositol-anchor biosynthesis. Its activity is regulated as follows. Inhibited by Ras, probably via the interaction between RAS2 and ERI1. Its function is as follows. Catalytic subunit in the complex catalyzing the transfer of N-acetylglucosamine from UDP-N-acetylglucosamine to phosphatidylinositol, the first step of GPI biosynthesis. The chain is Phosphatidylinositol N-acetylglucosaminyltransferase GPI3 subunit (SPT14) from Saccharomyces cerevisiae (strain YJM789) (Baker's yeast).